We begin with the raw amino-acid sequence, 106 residues long: Small ribosomal subunit protein uS10 (106 aa).

It belongs to the universal ribosomal protein uS10 family. In terms of assembly, part of the 30S ribosomal subunit.

Functionally, involved in the binding of tRNA to the ribosomes. The sequence is that of Small ribosomal subunit protein uS10 from Synechococcus sp. (strain WH7803).